Here is a 403-residue protein sequence, read N- to C-terminus: RNA-binding motif, single-stranded-interacting protein 1 (403 aa).

Residues 30–56 are disordered; it reads PAHPMAPPSPSTTSSNNNSSSSSNSGW. The segment covering 40 to 54 has biased composition (low complexity); the sequence is STTSSNNNSSSSSNS. RRM domains follow at residues 62–135 and 141–226; these read TNLY…MAKQ and TNLY…FADG. Position 208 is a phosphothreonine (Thr208).

It is found in the nucleus. In terms of biological role, single-stranded DNA binding protein that interacts with the region upstream of the C-myc gene. Binds specifically to the DNA sequence motif 5'-[AT]CT[AT][AT]T-3'. Probably has a role in DNA replication. The protein is RNA-binding motif, single-stranded-interacting protein 1 (RBMS1) of Bos taurus (Bovine).